The chain runs to 347 residues: GMP reductase (347 aa).

Residue 108-131 (TDFIKLSEILAKSEDLNFICIDIA) participates in NADP(+) binding. Positions 181 and 183 each coordinate K(+). The active-site Thioimidate intermediate is the Cys-186. 216-239 (IIGDGGCSCAGDVAKAFGGGADFV) contacts NADP(+).

This sequence belongs to the IMPDH/GMPR family. GuaC type 1 subfamily. Homotetramer.

The enzyme catalyses IMP + NH4(+) + NADP(+) = GMP + NADPH + 2 H(+). Its function is as follows. Catalyzes the irreversible NADPH-dependent deamination of GMP to IMP. It functions in the conversion of nucleobase, nucleoside and nucleotide derivatives of G to A nucleotides, and in maintaining the intracellular balance of A and G nucleotides. This chain is GMP reductase, found in Shewanella pealeana (strain ATCC 700345 / ANG-SQ1).